A 729-amino-acid chain; its full sequence is Rab-like protein 6 (729 aa).

Residue Met1 is modified to N-acetylmethionine. Residues 39–279 (GVQYNMKIVI…IFLEMMEARS (241 aa)) are small GTPase-like. GTP-binding positions include 50–57 (GDRNTGKT), 100–104 (DVVDK), and 177–179 (YRD). The disordered stretch occupies residues 281 to 729 (GHASPLAANG…HPGGGDYEEL (449 aa)). Over residues 290–315 (GQSPSPGSQSPVVPAGAVSTGSSSPG) the composition is skewed to low complexity. A compositionally biased stretch (pro residues) spans 331–351 (SSVPPVPPSEALPPPACPSAP). Over residues 395 to 416 (PDDRLDRSFLEDTTPARDEKKV) the composition is skewed to basic and acidic residues. 8 positions are modified to phosphoserine: Ser402, Ser425, Ser427, Ser470, Ser471, Ser492, Ser525, and Ser577. Over residues 489-502 (QQCSEPETKWSSIP) the composition is skewed to polar residues. Residues 581-595 (DTQRRADDFPVRDDP) show a composition bias toward basic and acidic residues. Ser596 bears the Phosphoserine mark. Positions 596–605 (SDVTDEDEGP) are enriched in acidic residues. Thr599 carries the post-translational modification Phosphothreonine. Residues 606–615 (AEPPPPPKLP) are compositionally biased toward pro residues. Residues 635–652 (AGPKESSEEGKEGKTPSK) show a composition bias toward basic and acidic residues. 2 positions are modified to phosphoserine: Ser640 and Ser641. The segment at 655-693 (KKKKKKGKEEEEKAAKKKSKHKKSKDKEEGKEERRRRQQ) is interaction with CDKN2A. Positions 669 to 678 (AKKKSKHKKS) are enriched in basic residues. Residues 679-689 (KDKEEGKEERR) are compositionally biased toward basic and acidic residues. Gly residues predominate over residues 711 to 729 (LGGGAPGGRHPGGGDYEEL).

Belongs to the small GTPase superfamily. Rab family. Isoform 1 is O-glycosylated, while other isoforms are not.

The protein resides in the cytoplasm. The protein localises to the nucleus. Its function is as follows. May enhance cellular proliferation. May reduce growth inhibitory activity of CDKN2A. The protein is Rab-like protein 6 (RABL6) of Homo sapiens (Human).